A 90-amino-acid chain; its full sequence is DNA-binding protein HU-alpha (90 aa).

This sequence belongs to the bacterial histone-like protein family. As to quaternary structure, heterodimer of an alpha and a beta chain.

In terms of biological role, histone-like DNA-binding protein which is capable of wrapping DNA to stabilize it, and thus to prevent its denaturation under extreme environmental conditions. This is DNA-binding protein HU-alpha (hupA) from Vibrio cholerae serotype O1 (strain ATCC 39315 / El Tor Inaba N16961).